The chain runs to 272 residues: Ribosomal RNA large subunit methyltransferase E (272 aa).

S-adenosyl-L-methionine contacts are provided by Gly-50, Trp-52, Asp-68, Asp-84, and Asp-109. The active-site Proton acceptor is the Lys-149. One can recognise a TRAM domain in the interval 196–254 (PLRRGDKFVVDIEKLGSGGDGAVLIEGFVVFVKEVEVGEKVRIKIADVKPNFAFADVEE).

The protein belongs to the class I-like SAM-binding methyltransferase superfamily. RNA methyltransferase RlmE family.

Its subcellular location is the cytoplasm. The enzyme catalyses uridine(2552) in 23S rRNA + S-adenosyl-L-methionine = 2'-O-methyluridine(2552) in 23S rRNA + S-adenosyl-L-homocysteine + H(+). In terms of biological role, specifically methylates the uridine in position 2552 of 23S rRNA at the 2'-O position of the ribose in the fully assembled 50S ribosomal subunit. The chain is Ribosomal RNA large subunit methyltransferase E from Methanosarcina acetivorans (strain ATCC 35395 / DSM 2834 / JCM 12185 / C2A).